A 447-amino-acid polypeptide reads, in one-letter code: Cysteine--tRNA ligase (447 aa).

Position 28 (cysteine 28) interacts with Zn(2+). Residues proline 30–asparagine 40 carry the 'HIGH' region motif. Zn(2+)-binding residues include cysteine 211, histidine 236, and glutamate 240. The short motif at lysine 268–serine 272 is the 'KMSKS' region element. An ATP-binding site is contributed by lysine 271.

This sequence belongs to the class-I aminoacyl-tRNA synthetase family. Monomer. Requires Zn(2+) as cofactor.

Its subcellular location is the cytoplasm. It catalyses the reaction tRNA(Cys) + L-cysteine + ATP = L-cysteinyl-tRNA(Cys) + AMP + diphosphate. This is Cysteine--tRNA ligase from Streptococcus pyogenes serotype M1.